The following is a 318-amino-acid chain: Pyrimidine-specific ribonucleoside hydrolase RihA (318 aa).

H240 is a catalytic residue.

The protein belongs to the IUNH family. RihA subfamily.

Hydrolyzes cytidine or uridine to ribose and cytosine or uracil, respectively. This is Pyrimidine-specific ribonucleoside hydrolase RihA from Shewanella oneidensis (strain ATCC 700550 / JCM 31522 / CIP 106686 / LMG 19005 / NCIMB 14063 / MR-1).